Reading from the N-terminus, the 527-residue chain is Bifunctional purine biosynthesis protein PurH (527 aa).

In terms of domain architecture, MGS-like spans 8 to 156; the sequence is AGAKRPIRRA…KNHPSVAVVV (149 aa).

It belongs to the PurH family.

It catalyses the reaction (6R)-10-formyltetrahydrofolate + 5-amino-1-(5-phospho-beta-D-ribosyl)imidazole-4-carboxamide = 5-formamido-1-(5-phospho-D-ribosyl)imidazole-4-carboxamide + (6S)-5,6,7,8-tetrahydrofolate. The enzyme catalyses IMP + H2O = 5-formamido-1-(5-phospho-D-ribosyl)imidazole-4-carboxamide. The protein operates within purine metabolism; IMP biosynthesis via de novo pathway; 5-formamido-1-(5-phospho-D-ribosyl)imidazole-4-carboxamide from 5-amino-1-(5-phospho-D-ribosyl)imidazole-4-carboxamide (10-formyl THF route): step 1/1. It participates in purine metabolism; IMP biosynthesis via de novo pathway; IMP from 5-formamido-1-(5-phospho-D-ribosyl)imidazole-4-carboxamide: step 1/1. In Mycobacterium sp. (strain JLS), this protein is Bifunctional purine biosynthesis protein PurH.